Consider the following 445-residue polypeptide: Glutamate--tRNA ligase 1 (445 aa).

A 'HIGH' region motif is present at residues 9–19 (PSPTGYLHVGN). The 'KMSKS' region signature appears at 238 to 242 (KISKR). ATP is bound at residue Lys241.

The protein belongs to the class-I aminoacyl-tRNA synthetase family. Glutamate--tRNA ligase type 1 subfamily. Monomer.

It is found in the cytoplasm. It catalyses the reaction tRNA(Glu) + L-glutamate + ATP = L-glutamyl-tRNA(Glu) + AMP + diphosphate. Its function is as follows. Catalyzes the attachment of glutamate to tRNA(Glu) in a two-step reaction: glutamate is first activated by ATP to form Glu-AMP and then transferred to the acceptor end of tRNA(Glu). The chain is Glutamate--tRNA ligase 1 from Ehrlichia ruminantium (strain Gardel).